The chain runs to 189 residues: Chitin synthase 1 (189 aa).

This sequence belongs to the chitin synthase family.

Its subcellular location is the cell membrane. It carries out the reaction [(1-&gt;4)-N-acetyl-beta-D-glucosaminyl](n) + UDP-N-acetyl-alpha-D-glucosamine = [(1-&gt;4)-N-acetyl-beta-D-glucosaminyl](n+1) + UDP + H(+). Polymerizes chitin, a structural polymer of the cell wall and septum, by transferring the sugar moiety of UDP-GlcNAc to the non-reducing end of the growing chitin polymer. The sequence is that of Chitin synthase 1 (CHS1) from Xylohypha bantiana.